The primary structure comprises 143 residues: Hemoglobin subunit alpha (143 aa).

Residues 2 to 143 form the Globin domain; that stretch reads VLSPADKTNV…VSTVLVSKYR (142 aa). S4 carries the phosphoserine modification. Residue K8 is modified to N6-succinyllysine. T9 bears the Phosphothreonine mark. An N6-succinyllysine modification is found at K12. At K17 the chain carries N6-acetyllysine; alternate. K17 is modified (N6-succinyllysine; alternate). Y25 carries the phosphotyrosine modification. S36 carries the phosphoserine modification. K41 carries the post-translational modification N6-succinyllysine. The residue at position 51 (S51) is a Phosphoserine. H60 is an O2 binding site. H89 serves as a coordination point for heme b. S104 carries the post-translational modification Phosphoserine. At T110 the chain carries Phosphothreonine. S126 bears the Phosphoserine mark. T136 bears the Phosphothreonine mark. At S140 the chain carries Phosphoserine.

The protein belongs to the globin family. As to quaternary structure, heterotetramer of two alpha chains and two beta chains. As to expression, red blood cells.

In terms of biological role, involved in oxygen transport from the lung to the various peripheral tissues. Functionally, hemopressin acts as an antagonist peptide of the cannabinoid receptor CNR1. Hemopressin-binding efficiently blocks cannabinoid receptor CNR1 and subsequent signaling. In Pipistrellus abramus (Japanese pipistrelle), this protein is Hemoglobin subunit alpha (HBA).